The primary structure comprises 1111 residues: uncharacterized protein (1111 aa).

The N-terminal stretch at 1–31 is a signal peptide; it reads MIRKLMKIPPFFTALFASAMFTLSVSQGVLA. Transmembrane regions (helical) follow at residues 490-510, 538-558, 572-592, 620-640, 644-664, 694-714, 797-817, 840-860, 885-905, 922-942, and 1003-1023; these read LPYL…IFKF, LALL…LAVC, FWHW…WISL, IIVV…TDAG, DVLG…IIAP, IPVG…LNLI, FIWT…VTVV, SITL…YVLV, ITTL…FATL, GLGF…ILLF, and LVIS…QLLL.

This sequence belongs to the MscS (TC 1.A.23) family.

The protein resides in the cell membrane. This is an uncharacterized protein from Haemophilus influenzae (strain ATCC 51907 / DSM 11121 / KW20 / Rd).